The chain runs to 530 residues: Chaperonin GroEL, chloroplastic (530 aa).

ATP-binding positions include 29–32, 86–90, glycine 414, 480–482, and aspartate 496; these read TLGP, DGTTT, and DAL.

This sequence belongs to the chaperonin (HSP60) family. In terms of assembly, forms a cylinder of 14 subunits composed of two heptameric rings stacked back-to-back. Interacts with the co-chaperonin GroES.

Its subcellular location is the plastid. The protein resides in the chloroplast. The catalysed reaction is ATP + H2O + a folded polypeptide = ADP + phosphate + an unfolded polypeptide.. Together with its co-chaperonin GroES, plays an essential role in assisting protein folding. The GroEL-GroES system forms a nano-cage that allows encapsulation of the non-native substrate proteins and provides a physical environment optimized to promote and accelerate protein folding. The sequence is that of Chaperonin GroEL, chloroplastic from Cyanidium caldarium (Red alga).